A 187-amino-acid chain; its full sequence is Peptidyl-tRNA hydrolase (187 aa).

Tyr14 contacts tRNA. The active-site Proton acceptor is His19. Residues Tyr63 and Asn65 each contribute to the tRNA site.

It belongs to the PTH family. In terms of assembly, monomer.

The protein localises to the cytoplasm. The catalysed reaction is an N-acyl-L-alpha-aminoacyl-tRNA + H2O = an N-acyl-L-amino acid + a tRNA + H(+). In terms of biological role, hydrolyzes ribosome-free peptidyl-tRNAs (with 1 or more amino acids incorporated), which drop off the ribosome during protein synthesis, or as a result of ribosome stalling. Its function is as follows. Catalyzes the release of premature peptidyl moieties from peptidyl-tRNA molecules trapped in stalled 50S ribosomal subunits, and thus maintains levels of free tRNAs and 50S ribosomes. This Thermodesulfovibrio yellowstonii (strain ATCC 51303 / DSM 11347 / YP87) protein is Peptidyl-tRNA hydrolase.